Reading from the N-terminus, the 248-residue chain is Probable transcriptional regulatory protein Psyr_1407 (248 aa).

This sequence belongs to the TACO1 family.

The protein resides in the cytoplasm. The protein is Probable transcriptional regulatory protein Psyr_1407 of Pseudomonas syringae pv. syringae (strain B728a).